Here is a 130-residue protein sequence, read N- to C-terminus: Methylglyoxal synthase (130 aa).

One can recognise an MGS-like domain in the interval 1-130 (MSKPRIALIA…DLARNMQDVC (130 aa)). Residues H11, K15, 37–40 (TGTT), and 57–58 (SG) contribute to the substrate site. Residue D63 is the Proton donor/acceptor of the active site. H90 provides a ligand contact to substrate.

This sequence belongs to the methylglyoxal synthase family.

The catalysed reaction is dihydroxyacetone phosphate = methylglyoxal + phosphate. In terms of biological role, catalyzes the formation of methylglyoxal from dihydroxyacetone phosphate. In Burkholderia cenocepacia (strain HI2424), this protein is Methylglyoxal synthase.